The chain runs to 461 residues: MEKDKKTWSGRFSEPVAQLVQRYTASIGFDYRLAEYDIQGSLAHARMLAATGIIQPADLAAIEQGLAQIREEISKGEFEWQLEQEDVHLNIERRLTALTGDAGKKLHTARSRNDQVATDIRLYLRTAIDEIIDLIHTLQYVLLDLAEQQAATIMPGFTHLQVAQPVSFGHHLLAYHEMLQRDGQRLQDCRKRVNQLPLGAAALAGTSYPVDRAMVAYELGFDDICHNSLDAVSDRDFAIEFCACAALIMMHLSRLSEELILWMNPAFGFIRLADRFCTGSSIMPQKKNPDVPELVRGKTGRINGHLVALLTLMKSQPLAYNKDNQEDKEPLFDTVDTLKDTLTIYADMLAGLHVNPEAMRQAALRGYATATDLADYLVKKGIPFRDAHEAVAQAVRFAESKACDLSELSLADLRQFSEVIEQDVFEVLTLEGSLQSRNHPGGTAPEQVREAICRARSQLPG.

It belongs to the lyase 1 family. Argininosuccinate lyase subfamily.

It is found in the cytoplasm. It carries out the reaction 2-(N(omega)-L-arginino)succinate = fumarate + L-arginine. Its pathway is amino-acid biosynthesis; L-arginine biosynthesis; L-arginine from L-ornithine and carbamoyl phosphate: step 3/3. The sequence is that of Argininosuccinate lyase from Nitrosomonas europaea (strain ATCC 19718 / CIP 103999 / KCTC 2705 / NBRC 14298).